An 88-amino-acid chain; its full sequence is Phosphocarrier protein HPr (88 aa).

The HPr domain maps to 1 to 88 (MVVKTVRVLN…RLFQNKFEEE (88 aa)). His15 (pros-phosphohistidine intermediate) is an active-site residue. Ser46 is subject to Phosphoserine; by HPrK/P.

The protein belongs to the HPr family.

Its subcellular location is the cytoplasm. Its activity is regulated as follows. Phosphorylation on Ser-46 inhibits the phosphoryl transfer from enzyme I to HPr. Its function is as follows. General (non sugar-specific) component of the phosphoenolpyruvate-dependent sugar phosphotransferase system (sugar PTS). This major carbohydrate active-transport system catalyzes the phosphorylation of incoming sugar substrates concomitantly with their translocation across the cell membrane. The phosphoryl group from phosphoenolpyruvate (PEP) is transferred to the phosphoryl carrier protein HPr by enzyme I. Phospho-HPr then transfers it to the PTS EIIA domain. The sequence is that of Phosphocarrier protein HPr (ptsH) from Treponema pallidum (strain Nichols).